The following is an 86-amino-acid chain: Anti-adapter protein IraP (86 aa).

A coiled-coil region spans residues 1–38 (MKNLIAELLVKLAQKEEEAKELTVQVEALEIVVTALLR).

Belongs to the IraP family. As to quaternary structure, interacts with RssB.

It localises to the cytoplasm. Functionally, inhibits RpoS proteolysis by regulating RssB activity, thereby increasing the stability of the sigma stress factor RpoS especially during phosphate starvation, but also in stationary phase and during nitrogen starvation. Its effect on RpoS stability is due to its interaction with RssB, which probably blocks the interaction of RssB with RpoS, and the consequent delivery of the RssB-RpoS complex to the ClpXP protein degradation pathway. This is Anti-adapter protein IraP from Klebsiella pneumoniae subsp. pneumoniae (strain ATCC 700721 / MGH 78578).